We begin with the raw amino-acid sequence, 127 residues long: Spore germination protein 2 (127 aa).

The first 25 residues, 1–25 (MNIRNSLILIISTILFFSIINGSLS), serve as a signal peptide directing secretion. 2 N-linked (GlcNAc...) asparagine glycosylation sites follow: Asn-54 and Asn-118.

The protein belongs to the Dictyostelium gerABC family.

It is found in the secreted. The protein is Spore germination protein 2 (gerB) of Dictyostelium discoideum (Social amoeba).